Reading from the N-terminus, the 180-residue chain is NADH-quinone oxidoreductase subunit I (180 aa).

2 4Fe-4S ferredoxin-type domains span residues 50–80 and 90–119; these read LTRDPDGEERCVACNLCAVACPVGCISLQKA and EFFRINFSRCIFCGLCEEACPTTAIQLTPD. Cysteine 60, cysteine 63, cysteine 66, cysteine 70, cysteine 99, cysteine 102, cysteine 105, and cysteine 109 together coordinate [4Fe-4S] cluster.

The protein belongs to the complex I 23 kDa subunit family. NDH-1 is composed of 13 different subunits. Subunits NuoA, H, J, K, L, M, N constitute the membrane sector of the complex. Requires [4Fe-4S] cluster as cofactor.

It is found in the cell inner membrane. It carries out the reaction a quinone + NADH + 5 H(+)(in) = a quinol + NAD(+) + 4 H(+)(out). Its function is as follows. NDH-1 shuttles electrons from NADH, via FMN and iron-sulfur (Fe-S) centers, to quinones in the respiratory chain. The immediate electron acceptor for the enzyme in this species is believed to be ubiquinone. Couples the redox reaction to proton translocation (for every two electrons transferred, four hydrogen ions are translocated across the cytoplasmic membrane), and thus conserves the redox energy in a proton gradient. In Yersinia pseudotuberculosis serotype O:1b (strain IP 31758), this protein is NADH-quinone oxidoreductase subunit I.